A 167-amino-acid polypeptide reads, in one-letter code: ATP synthase subunit b (167 aa).

Residues 15–37 (FWQTVIFLVTLYLLSKFAWGPIM) form a helical membrane-spanning segment.

Belongs to the ATPase B chain family. In terms of assembly, F-type ATPases have 2 components, F(1) - the catalytic core - and F(0) - the membrane proton channel. F(1) has five subunits: alpha(3), beta(3), gamma(1), delta(1), epsilon(1). F(0) has three main subunits: a(1), b(2) and c(10-14). The alpha and beta chains form an alternating ring which encloses part of the gamma chain. F(1) is attached to F(0) by a central stalk formed by the gamma and epsilon chains, while a peripheral stalk is formed by the delta and b chains.

It localises to the cell inner membrane. In terms of biological role, f(1)F(0) ATP synthase produces ATP from ADP in the presence of a proton or sodium gradient. F-type ATPases consist of two structural domains, F(1) containing the extramembraneous catalytic core and F(0) containing the membrane proton channel, linked together by a central stalk and a peripheral stalk. During catalysis, ATP synthesis in the catalytic domain of F(1) is coupled via a rotary mechanism of the central stalk subunits to proton translocation. Its function is as follows. Component of the F(0) channel, it forms part of the peripheral stalk, linking F(1) to F(0). The protein is ATP synthase subunit b of Cytophaga hutchinsonii (strain ATCC 33406 / DSM 1761 / CIP 103989 / NBRC 15051 / NCIMB 9469 / D465).